The chain runs to 995 residues: Polynucleotide 5'-hydroxyl-kinase NOL9 (995 aa).

Disordered stretches follow at residues Glu18–Lys173 and Ile271–Pro359. Composition is skewed to low complexity over residues Thr75 to Ser94 and Val110 to Lys129. The segment covering Glu279 to Ser354 has biased composition (acidic residues). Gly639–Ser646 is an ATP binding site.

This sequence belongs to the Clp1 family. NOL9/GRC3 subfamily.

It is found in the nucleus. The protein resides in the nucleolus. Polynucleotide 5'-kinase involved in rRNA processing. This is Polynucleotide 5'-hydroxyl-kinase NOL9 from Drosophila melanogaster (Fruit fly).